The primary structure comprises 66 residues: Phylloseptin-B1 (66 aa).

The first 22 residues, 1 to 22 (MAFLKKSLFLVLFLGLVSLSIC), serve as a signal peptide directing secretion. A propeptide spanning residues 23–46 (EEEKRETEEKEYDQGEDDKSEEKR) is cleaved from the precursor. Leucine 65 carries the leucine amide modification.

This sequence belongs to the frog skin active peptide (FSAP) family. Phylloseptin subfamily. Expressed by the skin glands.

The protein resides in the secreted. It localises to the target cell membrane. Antimicrobial peptide with activity against only a few strains of Gram-positive bacteria (S.aureus and B.megaterium). Acts in a synergistic effect in combination with Plasticin-B1 at doses that are not active alone. This chain is Phylloseptin-B1, found in Phyllomedusa bicolor (Two-colored leaf frog).